We begin with the raw amino-acid sequence, 605 residues long: Elongation factor 4 (605 aa).

The tr-type G domain maps to 9 to 192; it reads HHIRNFCIIA…AIVKRVPAPS (184 aa). GTP is bound by residues 21 to 26 and 139 to 142; these read DHGKST and NKID.

Belongs to the TRAFAC class translation factor GTPase superfamily. Classic translation factor GTPase family. LepA subfamily.

The protein resides in the cell inner membrane. It carries out the reaction GTP + H2O = GDP + phosphate + H(+). Required for accurate and efficient protein synthesis under certain stress conditions. May act as a fidelity factor of the translation reaction, by catalyzing a one-codon backward translocation of tRNAs on improperly translocated ribosomes. Back-translocation proceeds from a post-translocation (POST) complex to a pre-translocation (PRE) complex, thus giving elongation factor G a second chance to translocate the tRNAs correctly. Binds to ribosomes in a GTP-dependent manner. In Chlorobium phaeobacteroides (strain DSM 266 / SMG 266 / 2430), this protein is Elongation factor 4.